Consider the following 273-residue polypeptide: DNA repair protein RecO (273 aa).

Residues 249-273 (GRSLTEEPELKAEQTEAEKESQRPR) form a disordered region. Positions 252-273 (LTEEPELKAEQTEAEKESQRPR) are enriched in basic and acidic residues.

It belongs to the RecO family.

Its function is as follows. Involved in DNA repair and RecF pathway recombination. This is DNA repair protein RecO from Heliobacterium modesticaldum (strain ATCC 51547 / Ice1).